The following is a 212-amino-acid chain: Inner membrane-spanning protein YciB (212 aa).

The next 5 helical transmembrane spans lie at 49–69 (APVL…VLYL), 78–98 (TMLW…IWFH), 105–125 (WKPS…PIVA), 150–170 (LAWA…AYNF), and 178–198 (FKAF…GLYM).

Belongs to the YciB family.

The protein localises to the cell inner membrane. Functionally, plays a role in cell envelope biogenesis, maintenance of cell envelope integrity and membrane homeostasis. This is Inner membrane-spanning protein YciB from Leptothrix cholodnii (strain ATCC 51168 / LMG 8142 / SP-6) (Leptothrix discophora (strain SP-6)).